A 321-amino-acid polypeptide reads, in one-letter code: Lactamase-like protein notP (321 aa).

Zn(2+) contacts are provided by H108, H110, D112, and H113. D112 (proton donor/acceptor) is an active-site residue.

This sequence belongs to the metallo-beta-lactamase superfamily. Requires Zn(2+) as cofactor.

Lactamase-like protein; part of the gene cluster that mediates the biosynthesis of notoamide, a fungal indole alkaloid that belongs to a family of natural products containing a characteristic bicyclo[2.2.2]diazaoctane core. The first step of notoamide biosynthesis involves coupling of L-proline and L-tryptophan by the bimodular NRPS notE, to produce cyclo-L-tryptophan-L-proline called brevianamide F. The reverse prenyltransferase notF then acts as a deoxybrevianamide E synthase and converts brevianamide F to deoxybrevianamide E via reverse prenylation at C-2 of the indole ring leading to the bicyclo[2.2.2]diazaoctane core. Deoxybrevianamide E is further hydroxylated at C-6 of the indole ring, likely catalyzed by the cytochrome P450 monooxygenase notG, to yield 6-hydroxy-deoxybrevianamide E. 6-hydroxy-deoxybrevianamide E is a specific substrate of the prenyltransferase notC for normal prenylation at C-7 to produce 6-hydroxy-7-prenyl-deoxybrevianamide, also called notoamide S. As the proposed pivotal branching point in notoamide biosynthesis, notoamide S can be diverted to notoamide E through an oxidative pyran ring closure putatively catalyzed by either notH cytochrome P450 monooxygenase or the notD FAD-linked oxidoreductase. This step would be followed by an indole 2,3-epoxidation-initiated pinacol-like rearrangement catalyzed by the notB FAD-dependent monooxygenase leading to the formation of notoamide C and notoamide D. On the other hand notoamide S is converted to notoamide T by notH (or notD), a bifunctional oxidase that also functions as the intramolecular Diels-Alderase responsible for generation of (+)-notoamide T. To generate antipodal (-)-notoaminide T, notH' (or notD') in Aspergillus versicolor is expected to catalyze a Diels-Alder reaction leading to the opposite stereochemistry. The remaining oxidoreductase notD (or notH) likely catalyzes the oxidative pyran ring formation to yield (+)-stephacidin A. The FAD-dependent monooxygenase notI is highly similar to notB and is predicted to catalyze a similar conversion from (+)-stephacidin A to (-)-notoamide B via the 2,3-epoxidation of (+)-stephacidin A followed by a pinacol-type rearrangement. Finally, it remains unclear which enzyme could be responsible for the final hydroxylation steps leading to notoamide A and sclerotiamide. The function of notP in the notoamide biosynthesis has not been determined yet. The protein is Lactamase-like protein notP of Aspergillus sp. (strain MF297-2).